A 338-amino-acid polypeptide reads, in one-letter code: Large ribosomal subunit protein uL10 (338 aa).

Residues 298–338 (TVQQSQSQQPAAEEKKEEKKEEEKKGPSEEEIASGLASLFG) form a disordered region. Basic and acidic residues predominate over residues 309–325 (AEEKKEEKKEEEKKGPS).

It belongs to the universal ribosomal protein uL10 family. In terms of assembly, part of the 50S ribosomal subunit. Forms part of the ribosomal stalk which helps the ribosome interact with GTP-bound translation factors. Forms a heptameric L10(L12)2(L12)2(L12)2 complex, where L10 forms an elongated spine to which the L12 dimers bind in a sequential fashion.

In terms of biological role, forms part of the ribosomal stalk, playing a central role in the interaction of the ribosome with GTP-bound translation factors. In Saccharolobus solfataricus (strain ATCC 35092 / DSM 1617 / JCM 11322 / P2) (Sulfolobus solfataricus), this protein is Large ribosomal subunit protein uL10.